The following is a 90-amino-acid chain: Small ribosomal subunit protein uS17 (90 aa).

This sequence belongs to the universal ribosomal protein uS17 family. Part of the 30S ribosomal subunit.

In terms of biological role, one of the primary rRNA binding proteins, it binds specifically to the 5'-end of 16S ribosomal RNA. This Gluconobacter oxydans (strain 621H) (Gluconobacter suboxydans) protein is Small ribosomal subunit protein uS17.